A 1240-amino-acid polypeptide reads, in one-letter code: DNA polymerase catalytic subunit (1240 aa).

Positions 1-22 (MFCAAGGPASPGGKPAARAASG) are enriched in low complexity. 3 disordered regions span residues 1–44 (MFCA…RRQN), 646–695 (GLDK…RETG), and 1103–1139 (AAAP…ASKP). A compositionally biased stretch (acidic residues) spans 669–688 (NGDEDKDDDEDGDEDGDERE).

This sequence belongs to the DNA polymerase type-B family. Forms a complex with the ssDNA-binding protein UL29, the DNA polymerase processivity factor, and the alkaline exonuclease. Interacts with the putative helicase-primase complex subunit UL8; this interaction may coordinate leading and lagging strand DNA synthesis at the replication fork.

It is found in the host nucleus. The enzyme catalyses DNA(n) + a 2'-deoxyribonucleoside 5'-triphosphate = DNA(n+1) + diphosphate. The catalysed reaction is Endonucleolytic cleavage to 5'-phosphomonoester.. Functionally, replicates viral genomic DNA. The replication complex is composed of six viral proteins: the DNA polymerase, processivity factor, primase, primase-associated factor, helicase, and ssDNA-binding protein. Additionally, the polymerase contains an intrinsic ribonuclease H (RNase H) activity that specifically degrades RNA/DNA heteroduplexes or duplex DNA substrates in the 5' to 3' direction. Therefore, it can catalyze the excision of the RNA primers that initiate the synthesis of Okazaki fragments at a replication fork during viral DNA replication. This chain is DNA polymerase catalytic subunit, found in Human herpesvirus 2 (strain HG52) (HHV-2).